The primary structure comprises 432 residues: Glutamyl-tRNA reductase (432 aa).

Residues Thr49–Arg52, Ser101, Glu106–Gln108, and Gln112 contribute to the substrate site. Cys50 acts as the Nucleophile in catalysis. Gly181–Ile186 lines the NADP(+) pocket.

The protein belongs to the glutamyl-tRNA reductase family. In terms of assembly, homodimer.

It catalyses the reaction (S)-4-amino-5-oxopentanoate + tRNA(Glu) + NADP(+) = L-glutamyl-tRNA(Glu) + NADPH + H(+). The protein operates within porphyrin-containing compound metabolism; protoporphyrin-IX biosynthesis; 5-aminolevulinate from L-glutamyl-tRNA(Glu): step 1/2. Functionally, catalyzes the NADPH-dependent reduction of glutamyl-tRNA(Glu) to glutamate 1-semialdehyde (GSA). This is Glutamyl-tRNA reductase from Xylella fastidiosa (strain M12).